We begin with the raw amino-acid sequence, 338 residues long: Biotin synthase (338 aa).

Residues 63 to 290 (NGVQLSTLLS…RAKVRLSAGR (228 aa)) enclose the Radical SAM core domain. [4Fe-4S] cluster-binding residues include Cys-78, Cys-82, and Cys-85. The [2Fe-2S] cluster site is built by Cys-122, Cys-153, Cys-213, and Arg-285.

Belongs to the radical SAM superfamily. Biotin synthase family. Homodimer. The cofactor is [4Fe-4S] cluster. [2Fe-2S] cluster serves as cofactor.

It carries out the reaction (4R,5S)-dethiobiotin + (sulfur carrier)-SH + 2 reduced [2Fe-2S]-[ferredoxin] + 2 S-adenosyl-L-methionine = (sulfur carrier)-H + biotin + 2 5'-deoxyadenosine + 2 L-methionine + 2 oxidized [2Fe-2S]-[ferredoxin]. The protein operates within cofactor biosynthesis; biotin biosynthesis; biotin from 7,8-diaminononanoate: step 2/2. Its function is as follows. Catalyzes the conversion of dethiobiotin (DTB) to biotin by the insertion of a sulfur atom into dethiobiotin via a radical-based mechanism. This chain is Biotin synthase, found in Nitrosomonas eutropha (strain DSM 101675 / C91 / Nm57).